Reading from the N-terminus, the 1793-residue chain is Brefeldin A-inhibited guanine nucleotide-exchange protein 2 (1793 aa).

Position 2 is an N-acetylalanine (Ala2). 3 disordered regions span residues 45–71, 266–299, and 579–606; these read NSLQ…PGPL, TMSG…LLDS, and GSPQ…GGTS. Over residues 55–66 the composition is skewed to low complexity; that stretch reads SSAATDSESESS. The span at 270-281 shows a compositional bias: gly residues; it reads SGSGSGSGGQDG. 2 stretches are compositionally biased toward polar residues: residues 284–294 and 594–605; these read GTTTVETTNPT and GSDTYSESSGGT. A Phosphoserine modification is found at Ser595. The region spanning 610 to 797 is the SEC7 domain; it reads AIEQRRAYKL…RSLYERITKH (188 aa). Glu712 is a catalytic residue. Over residues 1311–1327 the composition is skewed to polar residues; the sequence is NKYKGTSGKIPQSSLHS. The tract at residues 1311-1333 is disordered; the sequence is NKYKGTSGKIPQSSLHSGKSGKQ.

In terms of assembly, homodimer.

Its subcellular location is the cytoplasm. The protein localises to the cytosol. It is found in the membrane. With respect to regulation, inhibited by brefeldin A. Its function is as follows. Activates the ARF proteins by exchanging bound GDP for free GTP. Plays a role in vesicular protein sorting. In Arabidopsis thaliana (Mouse-ear cress), this protein is Brefeldin A-inhibited guanine nucleotide-exchange protein 2 (BIG2).